The chain runs to 293 residues: SAGA-associated factor 29 (293 aa).

The stretch at 3–86 (LVSADSRIAE…LRKALDKIAE (84 aa)) forms a coiled coil. The 142-residue stretch at 152–293 (GDYVAKPGDK…VVACKEPKKK (142 aa)) folds into the SGF29 C-terminal domain. Histone H3K4me3 N-terminus binding regions lie at residues 194–196 (DID) and 240–243 (QTTC). The histone H3K4me3 binding stretch occupies residues 264–266 (FED). Position 288 is an N6-acetyllysine (lysine 288).

This sequence belongs to the SGF29 family. In terms of assembly, interacts with dimethylated and trimethylated 'Lys-4' of histone H3 (H3K4me2 and H3K4me3), with a preference for the trimethylated form (H3K4me3). Component of some SAGA-type complexes. Component of the ADA2A-containing complex (ATAC), composed of KAT14, KAT2A, TADA2L, TADA3L, ZZ3, MBIP, WDR5, YEATS2, CCDC101 and DR1. Interacts with (methylated) CGAS. Interacts with TADA3L, GCN5L2, SUPT3H and MYC.

Its subcellular location is the nucleus. Its function is as follows. Chromatin reader component of some histone acetyltransferase (HAT) SAGA-type complexes like the TFTC-HAT, ATAC or STAGA complexes. SGF29 specifically recognizes and binds methylated 'Lys-4' of histone H3 (H3K4me), with a preference for trimethylated form (H3K4me3). In the SAGA-type complexes, SGF29 is required to recruit complexes to H3K4me. Involved in the response to endoplasmic reticulum (ER) stress by recruiting the SAGA complex to H3K4me, thereby promoting histone H3 acetylation and cell survival. Also binds non-histone proteins that are methylated on Lys residues: specifically recognizes and binds CGAS monomethylated on 'Lys-491'. The chain is SAGA-associated factor 29 from Mus musculus (Mouse).